A 607-amino-acid chain; its full sequence is Terpenoid synthase 29 (607 aa).

5 residues coordinate Mg(2+): aspartate 358, aspartate 362, asparagine 502, threonine 506, and glutamate 510. Residues 358–362 (DDTYD) carry the DDXXD motif motif.

Belongs to the terpene synthase family. Tpsa subfamily. Mg(2+) serves as cofactor. Requires Mn(2+) as cofactor. As to expression, predominantly expressed in flowers but also in siliques, roots, leaves and stems.

Its subcellular location is the cytoplasm. The protein operates within secondary metabolite biosynthesis; terpenoid biosynthesis. The polypeptide is Terpenoid synthase 29 (TPS29) (Arabidopsis thaliana (Mouse-ear cress)).